An 858-amino-acid chain; its full sequence is DNA mismatch repair protein MutS (858 aa).

603–610 (GPNMSGKS) contributes to the ATP binding site.

This sequence belongs to the DNA mismatch repair MutS family.

This protein is involved in the repair of mismatches in DNA. It is possible that it carries out the mismatch recognition step. This protein has a weak ATPase activity. The chain is DNA mismatch repair protein MutS from Streptococcus agalactiae serotype Ia (strain ATCC 27591 / A909 / CDC SS700).